The sequence spans 251 residues: Uridylate kinase (251 aa).

24-27 (KISG) provides a ligand contact to ATP. Residues 32–37 (GDQGFG) are involved in allosteric activation by GTP. Residue Gly-66 coordinates UMP. ATP contacts are provided by Gly-67 and Arg-71. UMP contacts are provided by residues Asp-86 and 147 to 154 (TGNPYFTT). Positions 175, 181, and 184 each coordinate ATP.

The protein belongs to the UMP kinase family. In terms of assembly, homohexamer.

It is found in the cytoplasm. It catalyses the reaction UMP + ATP = UDP + ADP. It participates in pyrimidine metabolism; CTP biosynthesis via de novo pathway; UDP from UMP (UMPK route): step 1/1. With respect to regulation, allosterically activated by GTP. Inhibited by UTP. Catalyzes the reversible phosphorylation of UMP to UDP. The protein is Uridylate kinase of Ruegeria pomeroyi (strain ATCC 700808 / DSM 15171 / DSS-3) (Silicibacter pomeroyi).